A 274-amino-acid chain; its full sequence is Glutamate racemase (274 aa).

Residues 9-10 (DS) and 41-42 (YG) contribute to the substrate site. Cysteine 73 acts as the Proton donor/acceptor in catalysis. 74–75 (NT) is a binding site for substrate. Catalysis depends on cysteine 183, which acts as the Proton donor/acceptor. 184-185 (TH) serves as a coordination point for substrate.

This sequence belongs to the aspartate/glutamate racemases family.

It carries out the reaction L-glutamate = D-glutamate. The protein operates within cell wall biogenesis; peptidoglycan biosynthesis. Functionally, provides the (R)-glutamate required for cell wall biosynthesis. In Shewanella baltica (strain OS155 / ATCC BAA-1091), this protein is Glutamate racemase.